We begin with the raw amino-acid sequence, 274 residues long: Urease accessory protein UreD (274 aa).

This sequence belongs to the UreD family. UreD, UreF and UreG form a complex that acts as a GTP-hydrolysis-dependent molecular chaperone, activating the urease apoprotein by helping to assemble the nickel containing metallocenter of UreC. The UreE protein probably delivers the nickel.

The protein localises to the cytoplasm. Functionally, required for maturation of urease via the functional incorporation of the urease nickel metallocenter. The sequence is that of Urease accessory protein UreD from Enterobacter sp. (strain 638).